The following is a 316-amino-acid chain: uncharacterized protein (316 aa).

Thr-126 lines the substrate pocket. Catalysis depends on Tyr-149, which acts as the Proton acceptor.

Belongs to the NAD(P)-dependent epimerase/dehydratase family.

This is an uncharacterized protein from Bacillus subtilis (strain 168).